The following is a 129-amino-acid chain: NADH-quinone oxidoreductase subunit A (129 aa).

The next 3 membrane-spanning stretches (helical) occupy residues 9 to 29 (FPIG…LGLA), 68 to 88 (LLFI…VLLL), and 97 to 117 (LGWP…AGLV).

It belongs to the complex I subunit 3 family. NDH-1 is composed of 14 different subunits. Subunits NuoA, H, J, K, L, M, N constitute the membrane sector of the complex.

It localises to the cell inner membrane. It carries out the reaction a quinone + NADH + 5 H(+)(in) = a quinol + NAD(+) + 4 H(+)(out). Functionally, NDH-1 shuttles electrons from NADH, via FMN and iron-sulfur (Fe-S) centers, to quinones in the respiratory chain. The immediate electron acceptor for the enzyme in this species is believed to be ubiquinone. Couples the redox reaction to proton translocation (for every two electrons transferred, four hydrogen ions are translocated across the cytoplasmic membrane), and thus conserves the redox energy in a proton gradient. This chain is NADH-quinone oxidoreductase subunit A, found in Anaeromyxobacter dehalogenans (strain 2CP-C).